The primary structure comprises 182 residues: ADP-ribosylation factor-like protein 11 (182 aa).

Glycine 2 carries N-myristoyl glycine lipidation. GTP is bound by residues 19–26 (GLDSAGKT), 63–67 (DVGGQ), and 122–125 (NKQE).

The protein belongs to the small GTPase superfamily. Arf family.

May play a role in apoptosis. May act as a tumor suppressor. The protein is ADP-ribosylation factor-like protein 11 (ARL11) of Bos taurus (Bovine).